The following is a 493-amino-acid chain: Putative trans-acting regulator SP_1800 (493 aa).

The protein belongs to the AtxA/AcpA family.

This is Putative trans-acting regulator SP_1800 from Streptococcus pneumoniae serotype 4 (strain ATCC BAA-334 / TIGR4).